Consider the following 197-residue polypeptide: C-type lectin domain family 3 member A (197 aa).

Residues 1 to 24 (MAKNGLVIYILVITLLLDQTSCHA) form the signal peptide. Cystine bridges form between C68–C78, C95–C191, and C167–C183. The C-type lectin domain occupies 74–192 (FHKKCYLAAE…CHSSKRYICE (119 aa)).

It is found in the secreted. Functionally, promotes cell adhesion to laminin and fibronectin. This is C-type lectin domain family 3 member A (CLEC3A) from Bos taurus (Bovine).